The chain runs to 129 residues: Cortical cell-delineating protein (129 aa).

Positions 1–19 (MAPKVALFLALSLLFAATA) form a signal peptide, or 21. N-linked (GlcNAc...) asparagine glycosylation is present at asparagine 25. 2 repeat units span residues 29 to 34 (PVVPTP) and 35 to 40 (PVVPTP). The interval 29 to 40 (PVVPTPPVVPTP) is 2 X 6 AA tandem repeats of P-V-V-P-T-P.

The protein to carrot DC2.15 and PEMB3. As to expression, cortical ground meristem of developing roots.

Functionally, delineates a novel subset of developing cortical cells. It is probably involved in some aspect of transport of molecules to or from the vasculature. The polypeptide is Cortical cell-delineating protein (Zea mays (Maize)).